Reading from the N-terminus, the 739-residue chain is Adenosylcobalamin-dependent ribonucleoside-triphosphate reductase (739 aa).

Residues Cys119 and Cys419 are joined by a disulfide bond. Residues 147–158 form an effector region-1 region; it reads SMPFSFLFDELM. Residues 168–313 are effector region-2; that stretch reads ARSNISQIPR…ICNLIGKAVV (146 aa). Active-site residues include Cys408 and Glu410. The interval 565-626 is adenosylcobalamin-binding-1; sequence FHYGAYLIQR…NPNFASAGTV (62 aa). The adenosylcobalamin-binding-2 stretch occupies residues 685–724; the sequence is LQQAPKEPIDKETYEKRSQEITGNVEEVFSQLNSDVKDLE.

The protein belongs to the class II ribonucleoside-triphosphate reductase family. As to quaternary structure, monomer. Adenosylcob(III)alamin is required as a cofactor.

It catalyses the reaction a 2'-deoxyribonucleoside 5'-triphosphate + [thioredoxin]-disulfide + H2O = a ribonucleoside 5'-triphosphate + [thioredoxin]-dithiol. Allosterically regulated by ATP and dNTP. This Lactobacillus delbrueckii subsp. bulgaricus (strain ATCC 11842 / DSM 20081 / BCRC 10696 / JCM 1002 / NBRC 13953 / NCIMB 11778 / NCTC 12712 / WDCM 00102 / Lb 14) protein is Adenosylcobalamin-dependent ribonucleoside-triphosphate reductase (rtpR).